The chain runs to 1027 residues: Sodium/potassium-transporting ATPase subunit alpha-1 (1027 aa).

Residues 1-5 (MGVGD) constitute a propeptide that is removed on maturation. Over residues 1-10 (MGVGDGRDQY) the composition is skewed to basic and acidic residues. Residues 1 to 39 (MGVGDGRDQYELAAMSEQSGKKKSKNKKEKKEKDMDELK) form a disordered region. Residues 6–90 (GRDQYELAAM…NALTPPPTTP (85 aa)) are Cytoplasmic-facing. Ser16 carries the post-translational modification Phosphoserine; by PKC. Residues 29-39 (EKKEKDMDELK) show a composition bias toward basic and acidic residues. The interaction with phosphoinositide-3 kinase stretch occupies residues 85–87 (PPP). A helical membrane pass occupies residues 91-111 (EWVKFCKQMFGGFSMLLWTGA). At 112 to 134 (VLCFLAYGILAAMEDEPANDNLY) the chain is on the extracellular side. The chain crosses the membrane as a helical span at residues 135–155 (LGVVLSAVVIITGCFSYYQDA). Residues 156 to 291 (KSSKIMDSFK…VGRTPISIEI (136 aa)) lie on the Cytoplasmic side of the membrane. Residues 217–238 (DNSSLTGESEPQTRSPDFSNDN) form a disordered region. Residues 292 to 311 (EHFIHIITGVAVFLGVSFLL) traverse the membrane as a helical segment. Topologically, residues 312–323 (LSLVLGYSWLEA) are extracellular. A helical membrane pass occupies residues 324–341 (VIFLIGIIVANVPEGLLA). At 342-776 (TVTVCLTLTA…EEGRLIFDNL (435 aa)) the chain is on the cytoplasmic side. Residue Asp379 is the 4-aspartylphosphate intermediate of the active site. Lys490 contacts ATP. Positions 721 and 725 each coordinate Mg(2+). A helical transmembrane segment spans residues 777–796 (KKSIAYTLTSNIPEITPFLF). The Extracellular segment spans residues 797–806 (FIIANIPLPL). A helical membrane pass occupies residues 807–827 (GTVTILCIDLGTDMLPAISLA). The Cytoplasmic portion of the chain corresponds to 828-847 (YEAAESDIMKRQPRNPKTDK). A helical membrane pass occupies residues 848-870 (LVNERLISIAYGQIGMIQALAGF). Residues 871–922 (FTYFVILAENGFLPPRLLGIRMNWDDKYINDLEDSYGQQWTYEQRKIVEFTC) are Extracellular-facing. Residues 923-942 (HTAFFTSIVIVQWADLIICK) form a helical membrane-spanning segment. The Cytoplasmic segment spans residues 943–955 (TRRNSVFQQGMKN). Position 947 is a phosphoserine; by PKA (Ser947). A helical membrane pass occupies residues 956-974 (KILIFGLFEETALAAFLSY). Topologically, residues 975-989 (CPGMDVALRMYPLKP) are extracellular. The helical transmembrane segment at 990–1010 (NWWFCAFPYSLLIFIYDEIRK) threads the bilayer. Residues 1011–1027 (LILRRNPGGWMERETYY) lie on the Cytoplasmic side of the membrane.

It belongs to the cation transport ATPase (P-type) (TC 3.A.3) family. Type IIC subfamily. In terms of assembly, the sodium/potassium-transporting ATPase is composed of a catalytic alpha subunit, an auxiliary non-catalytic beta subunit and an additional regulatory subunit.

It localises to the cell membrane. The protein localises to the sarcolemma. The catalysed reaction is K(+)(out) + Na(+)(in) + ATP + H2O = K(+)(in) + Na(+)(out) + ADP + phosphate + H(+). Its function is as follows. This is the catalytic component of the active enzyme, which catalyzes the hydrolysis of ATP coupled with the exchange of sodium and potassium ions across the plasma membrane. This action creates the electrochemical gradient of sodium and potassium ions, providing the energy for active transport of various nutrients. In Catostomus commersonii (White sucker), this protein is Sodium/potassium-transporting ATPase subunit alpha-1 (atp1a1).